The primary structure comprises 154 residues: Prefoldin subunit 5 (154 aa).

A2 carries the N-acetylalanine modification. K42 bears the N6-acetyllysine mark. A Phosphoserine modification is found at S56.

Belongs to the prefoldin subunit alpha family. As to quaternary structure, heterohexamer of two PFD-alpha type and four PFD-beta type subunits.

It is found in the nucleus. Its function is as follows. Binds specifically to cytosolic chaperonin (c-CPN) and transfers target proteins to it. Binds to nascent polypeptide chain and promotes folding in an environment in which there are many competing pathways for nonnative proteins. Represses the transcriptional activity of MYC. This is Prefoldin subunit 5 (PFDN5) from Pongo abelii (Sumatran orangutan).